A 622-amino-acid chain; its full sequence is Apical membrane antigen 1 (622 aa).

Residues Met-1–Gly-24 form the signal peptide. Topologically, residues Gln-25–Lys-546 are extracellular. Cystine bridges form between Cys-149–Cys-302, Cys-217–Cys-247, Cys-263–Cys-275, Cys-320–Cys-418, and Cys-337–Cys-409. N-linked (GlcNAc...) asparagine glycosylation is present at Asn-162. Residues Asn-286, Asn-371, Asn-421, Asn-422, and Asn-499 are each glycosylated (N-linked (GlcNAc...) asparagine). 3 disulfide bridges follow: Cys-443/Cys-502, Cys-490/Cys-507, and Cys-492/Cys-509. A helical transmembrane segment spans residues Ile-547–Tyr-567. Over Lys-568–Tyr-622 the chain is Cytoplasmic. Residues Asp-577 to Lys-607 form a disordered region.

The protein belongs to the apicomplexan parasites AMA1 family.

Its subcellular location is the membrane. Functionally, involved in parasite invasion of erythrocytes. The polypeptide is Apical membrane antigen 1 (AMA-1) (Plasmodium falciparum (isolate 7G8)).